The following is a 288-amino-acid chain: 4-hydroxy-tetrahydrodipicolinate synthase (288 aa).

Threonine 42 provides a ligand contact to pyruvate. Tyrosine 129 acts as the Proton donor/acceptor in catalysis. Lysine 158 functions as the Schiff-base intermediate with substrate in the catalytic mechanism. Pyruvate is bound at residue isoleucine 200.

Belongs to the DapA family. In terms of assembly, homotetramer; dimer of dimers.

The protein localises to the cytoplasm. The enzyme catalyses L-aspartate 4-semialdehyde + pyruvate = (2S,4S)-4-hydroxy-2,3,4,5-tetrahydrodipicolinate + H2O + H(+). It participates in amino-acid biosynthesis; L-lysine biosynthesis via DAP pathway; (S)-tetrahydrodipicolinate from L-aspartate: step 3/4. Its function is as follows. Catalyzes the condensation of (S)-aspartate-beta-semialdehyde [(S)-ASA] and pyruvate to 4-hydroxy-tetrahydrodipicolinate (HTPA). The polypeptide is 4-hydroxy-tetrahydrodipicolinate synthase (Thermosipho melanesiensis (strain DSM 12029 / CIP 104789 / BI429)).